Consider the following 249-residue polypeptide: MNVLSCSINTLIKEGLYEISGVEVGQHFYWQIGGFQVHAQVLITSWVVIAILLGSAVLAIRNPQTIPTDGQNFFEFVLEFIRDVSQTQIGEEYGPWVPFIGTLFLFIFVSNWSGALLPWKIIQLPQGELAAPTNDINTTVALALLTSVAYFYAGLSKKGLGYFSKYIQPTPILLPINILEDFTKPLSLSFRLFGNILADELVVVVLVSLVPLVVPIPVMFLGLFTSGIQALIFATLAAAYIGESMEGHH.

5 helical membrane-spanning segments follow: residues Gln-40–Ile-60, Val-97–Leu-117, Ile-136–Ser-156, Leu-201–Leu-221, and Gly-222–Gly-242.

Belongs to the ATPase A chain family. As to quaternary structure, F-type ATPases have 2 components, CF(1) - the catalytic core - and CF(0) - the membrane proton channel. CF(1) has five subunits: alpha(3), beta(3), gamma(1), delta(1), epsilon(1). CF(0) has four main subunits: a, b, b' and c.

Its subcellular location is the plastid. It is found in the chloroplast thylakoid membrane. Its function is as follows. Key component of the proton channel; it plays a direct role in the translocation of protons across the membrane. The protein is ATP synthase subunit a, chloroplastic of Lepidium virginicum (Virginia pepperweed).